The following is a 495-amino-acid chain: UDP-N-acetylmuramoyl-L-alanyl-D-glutamate--2,6-diaminopimelate ligase (495 aa).

Residues L27, S29, and 44–46 contribute to the UDP-N-acetyl-alpha-D-muramoyl-L-alanyl-D-glutamate site; that span reads HQA. 116 to 122 is a binding site for ATP; that stretch reads GTNGKTT. UDP-N-acetyl-alpha-D-muramoyl-L-alanyl-D-glutamate-binding positions include N157, 158–159, S185, Q191, and R193; that span reads TT. K225 is modified (N6-carboxylysine). Residues R390, 414 to 417, G465, and E469 contribute to the meso-2,6-diaminopimelate site; that span reads DNPR. The Meso-diaminopimelate recognition motif signature appears at 414–417; sequence DNPR.

It belongs to the MurCDEF family. MurE subfamily. Mg(2+) is required as a cofactor. In terms of processing, carboxylation is probably crucial for Mg(2+) binding and, consequently, for the gamma-phosphate positioning of ATP.

Its subcellular location is the cytoplasm. The catalysed reaction is UDP-N-acetyl-alpha-D-muramoyl-L-alanyl-D-glutamate + meso-2,6-diaminopimelate + ATP = UDP-N-acetyl-alpha-D-muramoyl-L-alanyl-gamma-D-glutamyl-meso-2,6-diaminopimelate + ADP + phosphate + H(+). Its pathway is cell wall biogenesis; peptidoglycan biosynthesis. Catalyzes the addition of meso-diaminopimelic acid to the nucleotide precursor UDP-N-acetylmuramoyl-L-alanyl-D-glutamate (UMAG) in the biosynthesis of bacterial cell-wall peptidoglycan. This Salmonella typhimurium (strain LT2 / SGSC1412 / ATCC 700720) protein is UDP-N-acetylmuramoyl-L-alanyl-D-glutamate--2,6-diaminopimelate ligase.